Reading from the N-terminus, the 315-residue chain is NAD-dependent protein deacylase sirtuin-5, mitochondrial (315 aa).

The transit peptide at 1–39 (MSLLHFATRRLILQVLRELGLKAPPVHKTLKICIAMSRP) directs the protein to the mitochondrion. A Deacetylase sirtuin-type domain is found at 40–312 (SSNMADFRRF…PEALSPHESE (273 aa)). 61–80 (GAGVSAESGVPTFRGPGGFW) contacts NAD(+). Residues Y105 and R108 each contribute to the substrate site. Position 143–146 (143–146 (QNID)) interacts with NAD(+). H161 (proton acceptor) is an active-site residue. NAD(+) is bound by residues 254-256 (GTS), 280-282 (NTV), and C298.

The protein belongs to the sirtuin family. Class III subfamily. Monomer. Homodimer. Interacts with CPS1.

The protein resides in the mitochondrion. It localises to the cytoplasm. Its subcellular location is the cytosol. The protein localises to the nucleus. It carries out the reaction N(6)-malonyl-L-lysyl-[protein] + NAD(+) + H2O = 2''-O-malonyl-ADP-D-ribose + nicotinamide + L-lysyl-[protein]. The catalysed reaction is N(6)-succinyl-L-lysyl-[protein] + NAD(+) + H2O = 2''-O-succinyl-ADP-D-ribose + nicotinamide + L-lysyl-[protein]. It catalyses the reaction N(6)-glutaryl-L-lysyl-[protein] + NAD(+) + H2O = 2''-O-glutaryl-ADP-D-ribose + nicotinamide + L-lysyl-[protein]. Its function is as follows. NAD-dependent lysine demalonylase, desuccinylase and deglutarylase that specifically removes malonyl, succinyl and glutaryl groups on target proteins. Activates CPS1 and contributes to the regulation of blood ammonia levels during prolonged fasting: acts by mediating desuccinylation and deglutarylation of CPS1, thereby increasing CPS1 activity in response to elevated NAD levels during fasting. Activates SOD1 by mediating its desuccinylation, leading to reduced reactive oxygen species. Activates SHMT2 by mediating its desuccinylation. Modulates ketogenesis through the desuccinylation and activation of HMGCS2. Has weak NAD-dependent protein deacetylase activity; however this activity may not be physiologically relevant in vivo. Can deacetylate cytochrome c (CYCS) and a number of other proteins in vitro such as UOX. The chain is NAD-dependent protein deacylase sirtuin-5, mitochondrial from Monodelphis domestica (Gray short-tailed opossum).